We begin with the raw amino-acid sequence, 408 residues long: Chaperonin GroEL (408 aa).

Residues 30 to 33 (TLGP), Lys-51, and 87 to 91 (DGTTT) contribute to the ATP site.

The protein belongs to the chaperonin (HSP60) family. As to quaternary structure, forms a cylinder of 14 subunits composed of two heptameric rings stacked back-to-back. Interacts with the co-chaperonin GroES.

The protein resides in the cytoplasm. The catalysed reaction is ATP + H2O + a folded polypeptide = ADP + phosphate + an unfolded polypeptide.. Together with its co-chaperonin GroES, plays an essential role in assisting protein folding. The GroEL-GroES system forms a nano-cage that allows encapsulation of the non-native substrate proteins and provides a physical environment optimized to promote and accelerate protein folding. The protein is Chaperonin GroEL of Rickettsia rickettsii.